A 109-amino-acid polypeptide reads, in one-letter code: Gliadoralin-A (109 aa).

Positions 1 to 16 (MLVILLMVVVLALSSA) are cleaved as a signal peptide. A Pyrrolidone carboxylic acid modification is found at glutamine 17. The disordered stretch occupies residues 17-109 (QDPNRDFVVS…PRYQQPRRAV (93 aa)). Residues 35-109 (PSSQQGTVGG…PRYQQPRRAV (75 aa)) show a composition bias toward low complexity. Positions 107–109 (RAV) are excised as a propeptide.

Predominantly proteolytically processed at its C-terminus before secretion to produce the major form gliadoralin A 1-90. Further proteloytically processed after secretion to produce minor forms. Potential substrate of transglutaminase. As to expression, found in saliva (at protein level). Secreted from the submandibular gland.

Its subcellular location is the secreted. Functionally, may play a role in the formation of the protective mucosal protein pellicle involved in the reinforcement and protection of oral mucosal epithelial surface. The polypeptide is Gliadoralin-A (Rattus norvegicus (Rat)).